Here is a 95-residue protein sequence, read N- to C-terminus: Auxin-responsive protein SAUR27 (95 aa).

The protein belongs to the ARG7 family. In terms of assembly, interacts with PP2C-D1. As to expression, higher expression in thermo-responsive cultivars (e.g. cv. Alst-1, cv. Ang-0 and cv. Com-0) than in low thermo-responsive cultivars (e.g. cv. Dja-1, cv. El-0 and cv. Kon).

The protein localises to the cell membrane. In terms of biological role, functions as a positive effector of cell expansion through modulation of auxin transport. Involved in thermo-responsiveness of plant architecture. Enhances plasma membrane H(+)-ATPase. The chain is Auxin-responsive protein SAUR27 from Arabidopsis thaliana (Mouse-ear cress).